Consider the following 295-residue polypeptide: sn-glycerol-3-phosphate transport system permease protein UgpA (295 aa).

Over 1–11 (MSSFRPVFRSR) the chain is Cytoplasmic. The helical transmembrane segment at 12 to 32 (WLPYLLVAPQLVITVIFFIWP) threads the bilayer. At 33–80 (AGEALWYSLQSVDPFGFSSQFVGLENFVALFHDSYYLDAFWTTIKFSA) the chain is on the periplasmic side. The ABC transmembrane type-1 domain occupies 76–284 (IKFSALVTFS…FLVIILTVVQ (209 aa)). The helical transmembrane segment at 81–101 (LVTFSGLLVSLFFAALVDYVV) threads the bilayer. Over 102-109 (RGSRFYQT) the chain is Cytoplasmic. Residues 110–130 (LMLLPYAVAPAVAAVLWIFLF) traverse the membrane as a helical segment. The Periplasmic portion of the chain corresponds to 131–157 (NPGRGLITHFLGEFGYDWNHAQNSGQA). A helical transmembrane segment spans residues 158–178 (MFLVVFASVWKQISYNFLFFF). The Cytoplasmic portion of the chain corresponds to 179–207 (AALQSIPRSLVEAAAIDGAGPIRRFFRLS). The helical transmembrane segment at 208–228 (LPLIAPVSFFLLVVNLVYAFF) threads the bilayer. Over 229–262 (DTFPVIDAATAGGPVQATTTLIYKIYREGFTGLD) the chain is Periplasmic. A helical transmembrane segment spans residues 263–283 (LSASAAQSVVLMFLVIILTVV). Residues 284-295 (QFRYVESKVRYQ) lie on the Cytoplasmic side of the membrane.

This sequence belongs to the binding-protein-dependent transport system permease family. UgpAE subfamily. The complex is composed of two ATP-binding proteins (UgpC), two transmembrane proteins (UgpA and UgpE) and a solute-binding protein (UgpB).

The protein localises to the cell inner membrane. Its function is as follows. Part of the ABC transporter complex UgpBAEC involved in sn-glycerol-3-phosphate (G3P) import. Probably responsible for the translocation of the substrate across the membrane. The chain is sn-glycerol-3-phosphate transport system permease protein UgpA (ugpA) from Salmonella choleraesuis (strain SC-B67).